A 176-amino-acid polypeptide reads, in one-letter code: NAD(P)H-quinone oxidoreductase subunit J (176 aa).

It belongs to the complex I 30 kDa subunit family. NDH-1 can be composed of about 15 different subunits; different subcomplexes with different compositions have been identified which probably have different functions.

Its subcellular location is the cell inner membrane. It catalyses the reaction a plastoquinone + NADH + (n+1) H(+)(in) = a plastoquinol + NAD(+) + n H(+)(out). The catalysed reaction is a plastoquinone + NADPH + (n+1) H(+)(in) = a plastoquinol + NADP(+) + n H(+)(out). Functionally, NDH-1 shuttles electrons from an unknown electron donor, via FMN and iron-sulfur (Fe-S) centers, to quinones in the respiratory and/or the photosynthetic chain. The immediate electron acceptor for the enzyme in this species is believed to be plastoquinone. Couples the redox reaction to proton translocation, and thus conserves the redox energy in a proton gradient. Cyanobacterial NDH-1 also plays a role in inorganic carbon-concentration. This is NAD(P)H-quinone oxidoreductase subunit J from Gloeobacter violaceus (strain ATCC 29082 / PCC 7421).